The primary structure comprises 279 residues: 3-methyl-2-oxobutanoate hydroxymethyltransferase (279 aa).

2 residues coordinate Mg(2+): aspartate 44 and aspartate 83. Residues 44–45 (DS), aspartate 83, and lysine 112 each bind 3-methyl-2-oxobutanoate. Glutamate 114 contacts Mg(2+). The Proton acceptor role is filled by glutamate 181.

The protein belongs to the PanB family. As to quaternary structure, homodecamer; pentamer of dimers. Requires Mg(2+) as cofactor.

It localises to the cytoplasm. The enzyme catalyses 3-methyl-2-oxobutanoate + (6R)-5,10-methylene-5,6,7,8-tetrahydrofolate + H2O = 2-dehydropantoate + (6S)-5,6,7,8-tetrahydrofolate. It functions in the pathway cofactor biosynthesis; coenzyme A biosynthesis. Catalyzes the reversible reaction in which hydroxymethyl group from 5,10-methylenetetrahydrofolate is transferred onto alpha-ketoisovalerate to form ketopantoate. The sequence is that of 3-methyl-2-oxobutanoate hydroxymethyltransferase from Nitrosopumilus maritimus (strain SCM1).